The chain runs to 301 residues: MEPLMGMGVLALMGAAATIAGTTEDLESDVGSQSNPNSQVQLAPQMMYPHRIYNKAISGEPPSNALICAIGGTVASVLMTANLSVIFAIAIGALVASAVHGTYCITAYMGRTASQKRFRQPIYLDILRSHTPVMMGYAFITTFCILVVSYIMVAVLAHPFPLTLLAFIWGITVGAIGSSTGDVHYGAEREFQNVEFGSGLNAANSGNIVRKAESGLRNGIDNSWFCAKFGGPVTGLAFGMTVFLSGWVTAVFNPAISLTMGWLSVAAGVILVLLLIIWNRKIEVAARKAFGPYKEEEEVAA.

5 helical membrane passes run V85–I105, H130–Y150, I151–I171, P232–F252, and L258–W278.

Belongs to the MtrE family. As to quaternary structure, the complex is composed of 8 subunits; MtrA, MtrB, MtrC, MtrD, MtrE, MtrF, MtrG and MtrH.

It is found in the cell membrane. The catalysed reaction is 5-methyl-5,6,7,8-tetrahydromethanopterin + coenzyme M + 2 Na(+)(in) = 5,6,7,8-tetrahydromethanopterin + methyl-coenzyme M + 2 Na(+)(out). Functionally, part of a complex that catalyzes the formation of methyl-coenzyme M and tetrahydromethanopterin from coenzyme M and methyl-tetrahydromethanopterin. This is an energy-conserving, sodium-ion translocating step. The polypeptide is Tetrahydromethanopterin S-methyltransferase subunit E (Methanococcoides burtonii (strain DSM 6242 / NBRC 107633 / OCM 468 / ACE-M)).